A 246-amino-acid polypeptide reads, in one-letter code: D-erythrulose reductase (246 aa).

13–41 is a binding site for NADP(+); sequence LVTGAGKGIGRAVAVALCKAGARVTALSR. Residue Ser-138 coordinates substrate. Tyr-151 (proton acceptor) is an active-site residue. Residue Lys-155 coordinates NADP(+).

This sequence belongs to the short-chain dehydrogenases/reductases (SDR) family. As to quaternary structure, homotetramer. Post-translationally, the N-terminus is blocked. In terms of tissue distribution, highly expressed in kidney, and also found in high amounts in liver and testis. Low expression seen in all other tissues tested.

Its subcellular location is the cytoplasm. It carries out the reaction D-threitol + NADP(+) = D-erythrulose + NADPH + H(+). It catalyses the reaction xylitol + NADP(+) = L-xylulose + NADPH + H(+). Its function is as follows. Catalyzes the reduction of D-erythrulose to D-threitol with the concomitant oxidation of NAD(P)H to NAD(P)(+). NADH is less effective than NADPH. May also catalyze the reduction of L-xylulose. This chain is D-erythrulose reductase (DER), found in Gallus gallus (Chicken).